A 296-amino-acid polypeptide reads, in one-letter code: MKNEKIVVLYGGDSPEREVSLKSGKAVLDSLISQGYDAVGVDASGKELVAKLLELKPDKCFVALHGEDGENGRVSALLEMLEIKHTSSSMKSSVITMDKMISKEILMHHRMPTPMAKFLTDKLVAEDEISFPVAVKPSSGGSSIATFKVKSIQELKHAYEEASKYGEVMIEQWVTGKEITVAIVNDEVYSSVWIEPQNEFYDYESKYSGKSIYHSPSGLCEQKELEVRQLAKKAYDLLGCSGHARVDFIYDDRGNFYIMEINSSPGMTDNSLSPKSAAAEGVDFDSFVKRIIEQAQ.

One can recognise an ATP-grasp domain in the interval 103-293 (KEILMHHRMP…FDSFVKRIIE (191 aa)). 129 to 180 (ISFPVAVKPSSGGSSIATFKVKSIQELKHAYEEASKYGEVMIEQWVTGKEIT) contacts ATP. The Mg(2+) site is built by Asp247, Glu260, and Asn262.

This sequence belongs to the D-alanine--D-alanine ligase family. Mg(2+) is required as a cofactor. Mn(2+) serves as cofactor.

The protein localises to the cytoplasm. The catalysed reaction is 2 D-alanine + ATP = D-alanyl-D-alanine + ADP + phosphate + H(+). Its pathway is cell wall biogenesis; peptidoglycan biosynthesis. Cell wall formation. The protein is D-alanine--D-alanine ligase of Francisella tularensis subsp. tularensis (strain FSC 198).